We begin with the raw amino-acid sequence, 100 residues long: Small ribosomal subunit protein uS14 (100 aa).

The protein belongs to the universal ribosomal protein uS14 family. In terms of assembly, part of the 30S ribosomal subunit. Contacts proteins S3 and S10.

In terms of biological role, binds 16S rRNA, required for the assembly of 30S particles and may also be responsible for determining the conformation of the 16S rRNA at the A site. In Prochlorococcus marinus (strain MIT 9215), this protein is Small ribosomal subunit protein uS14.